Consider the following 365-residue polypeptide: tRNA(Met) cytidine acetate ligase (365 aa).

ATP contacts are provided by residues 7–20 (IAEF…HKYL), glycine 96, asparagine 152, and arginine 175.

This sequence belongs to the TmcAL family.

The protein localises to the cytoplasm. It carries out the reaction cytidine(34) in elongator tRNA(Met) + acetate + ATP = N(4)-acetylcytidine(34) in elongator tRNA(Met) + AMP + diphosphate. Functionally, catalyzes the formation of N(4)-acetylcytidine (ac(4)C) at the wobble position of elongator tRNA(Met), using acetate and ATP as substrates. First activates an acetate ion to form acetyladenylate (Ac-AMP) and then transfers the acetyl group to tRNA to form ac(4)C34. The protein is tRNA(Met) cytidine acetate ligase of Streptococcus pneumoniae (strain ATCC 700669 / Spain 23F-1).